The following is a 187-amino-acid chain: ECF RNA polymerase sigma factor SigK (187 aa).

The segment at 30-96 (YDHTCTRVYG…RAVDRVRAEQ (67 aa)) is sigma-70 factor domain-2. The Interaction with polymerase core subunit RpoC signature appears at 53-56 (ETTQ). Residues 133–182 (CLDGLTDTQRQCIELAYYGGLTYAEVSQRLATNLSTIKSRMRDALRGLRN) are sigma-70 factor domain-4. The H-T-H motif DNA-binding region spans 155-174 (YAEVSQRLATNLSTIKSRMR).

Belongs to the sigma-70 factor family. ECF subfamily. Interacts transiently with the RNA polymerase catalytic core formed by RpoA, RpoB, RpoC and RpoZ (2 alpha, 1 beta, 1 beta' and 1 omega subunit) to form the RNA polymerase holoenzyme that can initiate transcription. Interacts (via sigma-70 factor domain 4) with anti-sigma-K factor RskA.

Functionally, sigma factors are initiation factors that promote the attachment of RNA polymerase to specific initiation sites and are then released. Extracytoplasmic function (ECF) sigma factors are held in an inactive form by an anti-sigma factor until released by regulated intramembrane proteolysis. The sequence is that of ECF RNA polymerase sigma factor SigK (sigK) from Mycobacterium ulcerans (strain Agy99).